Consider the following 124-residue polypeptide: uncharacterized protein (124 aa).

A signal peptide spans M1 to S19. Transmembrane regions (helical) follow at residues I37–F57 and L86–I108.

Its subcellular location is the membrane. This is an uncharacterized protein from Saccharomyces cerevisiae (strain ATCC 204508 / S288c) (Baker's yeast).